The following is a 358-amino-acid chain: Mesaconyl-CoA hydratase (358 aa).

It belongs to the enoyl-CoA hydratase/isomerase family. As to quaternary structure, homodimer.

It carries out the reaction (2R,3S)-beta-methylmalyl-CoA = 2-methylfumaryl-CoA + H2O. With respect to regulation, shows highest activity at 0.5 M KCl. Does not require divalent ions for activity. Its function is as follows. Involved in the methylaspartate cycle. Catalyzes the reversible hydration of mesaconyl-CoA (2-methylfumaryl-CoA) to yield beta-methylmalyl-CoA ((2R,3S)-beta-methylmalyl-CoA). Also shows activity with mesaconyl-C4-CoA (3-methylfumaryl-CoA), (S)-citramalyl-CoA and (S)-malyl-CoA. The polypeptide is Mesaconyl-CoA hydratase (Haloarcula hispanica (strain ATCC 33960 / DSM 4426 / JCM 8911 / NBRC 102182 / NCIMB 2187 / VKM B-1755)).